Consider the following 675-residue polypeptide: UvrABC system protein B (675 aa).

The region spanning 30-417 (SGIEQGNRNQ…SDQIVEQVVR (388 aa)) is the Helicase ATP-binding domain. ATP is bound at residue 43-50 (GVTGSGKT). Residues 96–119 (YYDYYQPEAYVPSSDTFIEKDAAI) carry the Beta-hairpin motif. One can recognise a Helicase C-terminal domain in the interval 434–601 (QVDDVLSEIN…AVRQKVKEID (168 aa)). A UVR domain is found at 637 to 672 (AKHMSKLEKEMLKASKELQFEQAARLRDEILRLKAQ).

It belongs to the UvrB family. As to quaternary structure, forms a heterotetramer with UvrA during the search for lesions. Interacts with UvrC in an incision complex.

Its subcellular location is the cytoplasm. Functionally, the UvrABC repair system catalyzes the recognition and processing of DNA lesions. A damage recognition complex composed of 2 UvrA and 2 UvrB subunits scans DNA for abnormalities. Upon binding of the UvrA(2)B(2) complex to a putative damaged site, the DNA wraps around one UvrB monomer. DNA wrap is dependent on ATP binding by UvrB and probably causes local melting of the DNA helix, facilitating insertion of UvrB beta-hairpin between the DNA strands. Then UvrB probes one DNA strand for the presence of a lesion. If a lesion is found the UvrA subunits dissociate and the UvrB-DNA preincision complex is formed. This complex is subsequently bound by UvrC and the second UvrB is released. If no lesion is found, the DNA wraps around the other UvrB subunit that will check the other stand for damage. The protein is UvrABC system protein B of Acinetobacter baylyi (strain ATCC 33305 / BD413 / ADP1).